The following is a 113-amino-acid chain: Beta-defensin 112 (113 aa).

Cystine bridges form between C54-C82, C61-C75, and C65-C83.

The protein belongs to the beta-defensin family.

It localises to the secreted. In terms of biological role, has antibacterial activity. This is Beta-defensin 112 (DEFB112) from Homo sapiens (Human).